The sequence spans 38 residues: STKLVIDPVTRIEGHGKVTVHLDDNNNVVDAHLHVVEF.

It belongs to the [NiFe]/[NiFeSe] hydrogenase large subunit family. As to quaternary structure, tetramer of an alpha and a gamma subunits (flavin-containing dimer), and a delta and a nickel-containing beta subunits (hydrogenase dimer). The cofactor is FMN. Ni(2+) is required as a cofactor.

It is found in the cytoplasm. It catalyses the reaction H2 + NAD(+) = NADH + H(+). This is NAD-reducing hydrogenase HoxS subunit beta (hoxH) from Rhodococcus opacus (Nocardia opaca).